The chain runs to 120 residues: Spermidine export protein MdtJ (120 aa).

A run of 4 helical transmembrane segments spans residues 1–21 (MFYWILLALAIATEITGTLSM), 31–51 (AGFILMLVMITLSYIFLSFAV), 54–74 (IALGVAYALWEGIGILFITIF), and 81–101 (EALSTMKIAGLLTLVAGIVLI).

It belongs to the drug/metabolite transporter (DMT) superfamily. Small multidrug resistance (SMR) (TC 2.A.7.1) family. MdtJ subfamily. In terms of assembly, forms a complex with MdtI.

The protein resides in the cell inner membrane. Functionally, catalyzes the excretion of spermidine. The chain is Spermidine export protein MdtJ from Salmonella paratyphi A (strain ATCC 9150 / SARB42).